A 587-amino-acid chain; its full sequence is Arginine--tRNA ligase (587 aa).

A 'HIGH' region motif is present at residues alanine 127–histidine 137.

This sequence belongs to the class-I aminoacyl-tRNA synthetase family. Monomer.

The protein resides in the cytoplasm. The catalysed reaction is tRNA(Arg) + L-arginine + ATP = L-arginyl-tRNA(Arg) + AMP + diphosphate. This chain is Arginine--tRNA ligase, found in Dechloromonas aromatica (strain RCB).